The following is a 419-amino-acid chain: MPKETVILAYSGGLDTSCVLKWLLDKQYEVICVLADVGQKEDFTAAEKKALKIGAKKVIVADVKQSFVEDYIWPAVQMGLVYEERYLLGTSLARPCISVALMEVAREYGAKYLAHGATGKGNDQVRFELCAYALKPDLKIIAPWRDVEFCCQFQGRQDLIAYAQQHGIEVSAKPATPWSTDANILHISYESGILEDPNTVAPENLYEMTVDPLTRAPRDPVHLVIQFDRGLPSSVEDLPGGRVYTKPLEMLDFLNKLGGSYGIGRIDIVENRFVGLKSRGVYETPGGTILFAAHQDLEVFALDREVLRTKQVLRDRMADYVYNGFWFSPEAIYARKCIELAEQRVSGKVTVELAPGYCRAIARKAAKDVGALYNEQLVSMDVHGGYVPQDAGGFIAINAVRIREHVRAFGAYDVPTKKN.

ATP is bound by residues 9 to 17 (AYSGGLDTS) and A35. The L-citrulline site is built by Y86 and S91. Residue 114-122 (AHGATGKGN) coordinates ATP. L-aspartate-binding residues include T118, N122, and D123. Position 122 (N122) interacts with L-citrulline. Residues R126, S179, S188, E270, and Y282 each coordinate L-citrulline.

It belongs to the argininosuccinate synthase family. Type 1 subfamily. In terms of assembly, homotetramer.

The enzyme catalyses L-citrulline + L-aspartate + ATP = 2-(N(omega)-L-arginino)succinate + AMP + diphosphate + H(+). The protein operates within amino-acid biosynthesis; L-arginine biosynthesis; L-arginine from L-ornithine and carbamoyl phosphate: step 2/3. It functions in the pathway nitrogen metabolism; urea cycle; (N(omega)-L-arginino)succinate from L-aspartate and L-citrulline: step 1/1. The sequence is that of Argininosuccinate synthase from Drosophila melanogaster (Fruit fly).